The primary structure comprises 638 residues: ABC transporter G family member 12 (638 aa).

A disordered region spans residues 42 to 61; it reads KQEKAKKKNDTESSTGDMNT. The ABC transporter domain maps to 58–301; it reads DMNTGVSTTI…SLGYPCPNNT (244 aa). 91-98 serves as a coordination point for ATP; sequence GPSGSGKS. Residues 374-633 enclose the ABC transmembrane type-2 domain; it reads GNFVARVGTA…WTSYLALHFL (260 aa). A run of 7 helical transmembrane segments spans residues 376-396, 410-430, 459-479, 484-504, 516-536, 544-564, and 612-632; these read FVARVGTAVVTGLLFGVCFAG, TIFFLITGLNLTPFAVISLFL, TLIVFLVALINAAICYLFAHL, GHFFFAIMVYFFVHLLSDFMI, MTFAYGSGLSVIYMLFAGFYV, SFGWLHWVNPLFYSFVSLVVN, and FGVVVAWTVFFFWTSYLALHF.

This sequence belongs to the ABC transporter superfamily. ABCG family. Eye pigment precursor importer (TC 3.A.1.204) subfamily.

The protein resides in the membrane. The protein is ABC transporter G family member 12 (abcG12) of Dictyostelium discoideum (Social amoeba).